Reading from the N-terminus, the 130-residue chain is Protein LLP homolog (130 aa).

Basic residues predominate over residues 1 to 21 (MAKSLRSKWKRKMRAEKRKKN). Disordered regions lie at residues 1-23 (MAKSLRSKWKRKMRAEKRKKNAP) and 57-76 (QEKMQCEEGRCDGADEEKDD). A coiled-coil region spans residues 10–78 (KRKMRAEKRK…GADEEKDDMK (69 aa)). Lysine 78 is covalently cross-linked (Glycyl lysine isopeptide (Lys-Gly) (interchain with G-Cter in SUMO2)). Over residues 104 to 124 (RQRKRLKAKREKKRGKSRAKA) the composition is skewed to basic residues. Positions 104–130 (RQRKRLKAKREKKRGKSRAKAAKGLAW) are disordered.

It belongs to the learning-associated protein family. As to quaternary structure, interacts with CTCF, MYO1C and with the transcriptional machinery, including RNA polymerase II and TBP. Widely expressed, with high levels in testis and spleen and low levels in heart. In the brain, expressed in the cortex and hippocampus, and at very low levels in the cerebellum.

It localises to the nucleus. The protein localises to the nucleolus. The protein resides in the chromosome. In hippocampal neurons, regulates dendritic and spine growth and synaptic transmission. This chain is Protein LLP homolog (Llph), found in Mus musculus (Mouse).